We begin with the raw amino-acid sequence, 476 residues long: Aspartyl/glutamyl-tRNA(Asn/Gln) amidotransferase subunit B (476 aa).

Belongs to the GatB/GatE family. GatB subfamily. In terms of assembly, heterotrimer of A, B and C subunits.

It catalyses the reaction L-glutamyl-tRNA(Gln) + L-glutamine + ATP + H2O = L-glutaminyl-tRNA(Gln) + L-glutamate + ADP + phosphate + H(+). It carries out the reaction L-aspartyl-tRNA(Asn) + L-glutamine + ATP + H2O = L-asparaginyl-tRNA(Asn) + L-glutamate + ADP + phosphate + 2 H(+). Its function is as follows. Allows the formation of correctly charged Asn-tRNA(Asn) or Gln-tRNA(Gln) through the transamidation of misacylated Asp-tRNA(Asn) or Glu-tRNA(Gln) in organisms which lack either or both of asparaginyl-tRNA or glutaminyl-tRNA synthetases. The reaction takes place in the presence of glutamine and ATP through an activated phospho-Asp-tRNA(Asn) or phospho-Glu-tRNA(Gln). The sequence is that of Aspartyl/glutamyl-tRNA(Asn/Gln) amidotransferase subunit B from Neisseria meningitidis serogroup A / serotype 4A (strain DSM 15465 / Z2491).